Here is a 443-residue protein sequence, read N- to C-terminus: ATP-dependent protease ATPase subunit HslU (443 aa).

Residues isoleucine 18, 60–65, aspartate 256, glutamate 321, and arginine 393 contribute to the ATP site; that span reads GVGKTE.

This sequence belongs to the ClpX chaperone family. HslU subfamily. As to quaternary structure, a double ring-shaped homohexamer of HslV is capped on each side by a ring-shaped HslU homohexamer. The assembly of the HslU/HslV complex is dependent on binding of ATP.

The protein resides in the cytoplasm. Its function is as follows. ATPase subunit of a proteasome-like degradation complex; this subunit has chaperone activity. The binding of ATP and its subsequent hydrolysis by HslU are essential for unfolding of protein substrates subsequently hydrolyzed by HslV. HslU recognizes the N-terminal part of its protein substrates and unfolds these before they are guided to HslV for hydrolysis. The chain is ATP-dependent protease ATPase subunit HslU from Nitrosospira multiformis (strain ATCC 25196 / NCIMB 11849 / C 71).